The chain runs to 109 residues: Nucleoid-associated protein VIBHAR_03086 (109 aa).

Disordered stretches follow at residues 1-21 (MFGK…QDRM) and 88-109 (QKEK…KMPF).

Belongs to the YbaB/EbfC family. As to quaternary structure, homodimer.

The protein resides in the cytoplasm. The protein localises to the nucleoid. In terms of biological role, binds to DNA and alters its conformation. May be involved in regulation of gene expression, nucleoid organization and DNA protection. The polypeptide is Nucleoid-associated protein VIBHAR_03086 (Vibrio campbellii (strain ATCC BAA-1116)).